Here is a 582-residue protein sequence, read N- to C-terminus: Semenogelin-2 (582 aa).

The first 23 residues, 1-23 (MKSIILFVLSLLLILEKQAAVMG), serve as a signal peptide directing secretion. Disordered stretches follow at residues 25-65 (KGGS…SSSI), 91-157 (HKTT…GISS), 171-192 (LSKE…GSQS), 272-366 (NLNQ…KDIQ), and 393-557 (SNQD…HNTV). A compositionally biased stretch (basic and acidic residues) spans 50-59 (GQKDKQHTES). Basic residues predominate over residues 111 to 134 (QKGRDHVKPKRHFRLIVIHRKGGQ). 2 stretches are compositionally biased toward polar residues: residues 137 to 157 (HGTQ…GISS) and 174 to 192 (EQAS…GSQS). Over residues 293–310 (TEERQFNHGEKSVQKDVP) the composition is skewed to basic and acidic residues. Over residues 325 to 335 (KSQNQVSIPSQ) the composition is skewed to polar residues. 4 stretches are compositionally biased toward basic and acidic residues: residues 336-345 (DQEHGHKENK), 353-366 (TEER…KDIQ), 396-405 (DQEHGHKENK), and 413-426 (TEER…KDIQ). Polar residues-rich tracts occupy residues 427-437 (KSVSKGSISIQ) and 445-455 (KSQNQVTIPSQ). The segment covering 456-465 (DQEHGHKENK) has biased composition (basic and acidic residues). Composition is skewed to polar residues over residues 487–498 (KDVSQSSLSFQT) and 506–529 (SQIQ…NSGK). The segment covering 530–546 (SADREQDLLSHEQESRY) has biased composition (basic and acidic residues). Residues 547-557 (QQKSSGAHNTV) show a composition bias toward polar residues.

It belongs to the semenogelin family. Interacts with SERPINA5.

The protein localises to the secreted. In terms of biological role, participates in the formation of a gel matrix (sperm coagulum) entrapping the accessory gland secretions and ejaculated spermatozoa. The sequence is that of Semenogelin-2 (SEMG2) from Colobus guereza (Mantled guereza).